A 195-amino-acid chain; its full sequence is Calcineurin B homologous protein 1 (195 aa).

The N-myristoyl glycine moiety is linked to residue G2. Positions 2–6 match the Necessary for association with microtubule and interaction with GAPDH motif; sequence GSRAS. EF-hand domains are found at residues 26 to 61, 66 to 101, 110 to 145, and 151 to 186; these read SQIT…AINP, IINA…KSKD, SRSN…MVGV, and QLGS…VDVE. Ca(2+)-binding residues include D123, D125, D127, K129, and E134. The Nuclear export signal 1 motif lies at 138 to 147; it reads VLRMMVGVNI. Residues 143 to 185 are necessary for nuclear export signal; that stretch reads VGVNISDEQLGSIADRTIQEADQDGDSAISFTEFVKVLEKVDV. Positions 164, 166, 168, and 175 each coordinate Ca(2+). Residues 176 to 185 carry the Nuclear export signal 2 motif; that stretch reads FVKVLEKVDV.

This sequence belongs to the calcineurin regulatory subunit family. CHP subfamily. In terms of assembly, monomer. Interacts with STK17B; the interaction occurs in a calcium-independent manner and induces the translocation of CHP1 from the Golgi to the nucleus. Interacts with GAPDH; the interaction is direct, occurs in a N-myristoylation-dependent manner and facilitates the ability of CHP1 to bind microtubules. Interacts with KIF1B (via the C-terminal end of the kinesin-motor domain); the interaction occurs in a calcium-dependent manner. Associates (via C-terminal domain) with microtubules; the association occurs with polymerized microtubules during the cell cycle in a myristoylation- and calcium-independent manner and is enhanced by GAPDH. Interacts with PPP3CA. Interacts with SLC9A1/NHE1 (via the C-terminal domain); the interaction occurs at the plasma membrane in a calcium-dependent manner and at a domain that is critical for growth factor stimulation of the exchanger. Interacts with SLC9A3; increases SLC9A3 trafficking and activity at the plasma membrane. Post-translationally, phosphorylated; decreased phosphorylation is associated with an increase in SLC9A1/NHE1 Na(+)/H(+) exchange activity. Phosphorylation occurs in serum-dependent manner. The phosphorylation state may regulate the binding to SLC9A1/NHE1. In terms of processing, both N-myristoylation and calcium-mediated conformational changes are essential for its function in exocytic traffic. N-myristoylation is required for its association with microtubules and interaction with GAPDH, but not for the constitutive association to membranes. In terms of tissue distribution, ubiquitously expressed. Has been found in fetal eye, lung, liver, muscle, heart, kidney, thymus and spleen.

Its subcellular location is the nucleus. The protein localises to the cytoplasm. It is found in the cytoskeleton. It localises to the endomembrane system. The protein resides in the endoplasmic reticulum-Golgi intermediate compartment. Its subcellular location is the endoplasmic reticulum. The protein localises to the cell membrane. It is found in the membrane. Its function is as follows. Calcium-binding protein involved in different processes such as regulation of vesicular trafficking, plasma membrane Na(+)/H(+) exchanger and gene transcription. Involved in the constitutive exocytic membrane traffic. Mediates the association between microtubules and membrane-bound organelles of the endoplasmic reticulum and Golgi apparatus and is also required for the targeting and fusion of transcytotic vesicles (TCV) with the plasma membrane. Functions as an integral cofactor in cell pH regulation by controlling plasma membrane-type Na(+)/H(+) exchange activity. Affects the pH sensitivity of SLC9A1/NHE1 by increasing its sensitivity at acidic pH. Required for the stabilization and localization of SLC9A1/NHE1 at the plasma membrane. Inhibits serum- and GTPase-stimulated Na(+)/H(+) exchange. Plays a role as an inhibitor of ribosomal RNA transcription by repressing the nucleolar UBF1 transcriptional activity. May sequester UBF1 in the nucleoplasm and limit its translocation to the nucleolus. Associates to the ribosomal gene promoter. Acts as a negative regulator of the calcineurin/NFAT signaling pathway. Inhibits NFAT nuclear translocation and transcriptional activity by suppressing the calcium-dependent calcineurin phosphatase activity. Also negatively regulates the kinase activity of the apoptosis-induced kinase STK17B. Inhibits both STK17B auto- and substrate-phosphorylations in a calcium-dependent manner. The chain is Calcineurin B homologous protein 1 (CHP1) from Homo sapiens (Human).